The chain runs to 271 residues: Nodulin-26 (271 aa).

2 helical membrane-spanning segments follow: residues 40-62 (LVAEAVGTYFLIFAGCASLVVNE) and 72-94 (GIAIVWGLVLTVLVYTVGHISGG). Positions 97–99 (NPA) match the NPA 1 motif. A run of 3 helical transmembrane segments spans residues 115–137 (VPAYVVAQLLGSILASGTLRLLF), 152–174 (TNLQAFVFEFIMTFFLMFVICGV), and 181–203 (VGEFAGIAIGSTLLLNVIIGGPV). The NPA 2 signature appears at 209–211 (NPA). A helical membrane pass occupies residues 225–247 (GIWIYLLAPVVGAIAGAWVYNIV). At serine 262 the chain carries Phosphoserine; by CPK.

It belongs to the MIP/aquaporin (TC 1.A.8) family. NIP (TC 1.A.8.12) subfamily.

It localises to the symbiosome. It is found in the peribacteroid membrane. Aquaporins facilitate the transport of water and small neutral solutes across cell membranes. This aquaporin may function in transporting small molecules across the peribacteroid membranes. The sequence is that of Nodulin-26 from Glycine max (Soybean).